The following is a 460-amino-acid chain: Centrosomal protein CEP57L1 (460 aa).

S49 is modified (phosphoserine). Coiled-coil stretches lie at residues 51-228 and 317-384; these read NSQA…EISK and ISIC…LKKH. Polar residues predominate over residues 399–410; that stretch reads KMSEASGIQQED. The disordered stretch occupies residues 399 to 423; it reads KMSEASGIQQEDSYPKGSKNIKNSP.

This sequence belongs to the translokin family.

The protein localises to the cytoplasm. Its subcellular location is the cytoskeleton. It is found in the microtubule organizing center. The protein resides in the centrosome. Functionally, centrosomal protein which may be required for microtubule attachment to centrosomes. The chain is Centrosomal protein CEP57L1 (CEP57L1) from Homo sapiens (Human).